Here is a 751-residue protein sequence, read N- to C-terminus: Photosystem I P700 chlorophyll a apoprotein A1 (751 aa).

A run of 8 helical transmembrane segments spans residues 71–94, 157–180, 196–220, 292–310, 347–370, 386–412, 434–456, and 532–550; these read VFSAHFGQLSIIFLWLSGMYFHGA, LYCTAIGALIFASLMLFAGWFHYH, LNHHLAGLLGLGSLSWAGHQIHVSL, IAHHHLAIAILFLIAGHMY, WHAQLSLNLAMLGSTTIVVAHHMY, LSLFTHHMWIGGFLIVGAAAHAAIFMV, AIISHLNWVCIFLGFHSFGLYIH, and FLVHHIHAFTIHVTVLILL. The [4Fe-4S] cluster site is built by cysteine 574 and cysteine 583. A run of 2 helical transmembrane segments spans residues 590–611 and 665–687; these read HVFLGLFWMYNSISVVIFHFSW and LSAYGLFFLGAHFVWAFSLMFLF. Histidine 676 contacts chlorophyll a'. Methionine 684 and tyrosine 692 together coordinate chlorophyll a. Residue tryptophan 693 coordinates phylloquinone. Residues 725 to 745 traverse the membrane as a helical segment; the sequence is AVGVTHYLLGGIATTWAFFLA.

Belongs to the PsaA/PsaB family. The PsaA/B heterodimer binds the P700 chlorophyll special pair and subsequent electron acceptors. PSI consists of a core antenna complex that captures photons, and an electron transfer chain that converts photonic excitation into a charge separation. The eukaryotic PSI reaction center is composed of at least 11 subunits. P700 is a chlorophyll a/chlorophyll a' dimer, A0 is one or more chlorophyll a, A1 is one or both phylloquinones and FX is a shared 4Fe-4S iron-sulfur center. is required as a cofactor.

It localises to the plastid. Its subcellular location is the chloroplast thylakoid membrane. The enzyme catalyses reduced [plastocyanin] + hnu + oxidized [2Fe-2S]-[ferredoxin] = oxidized [plastocyanin] + reduced [2Fe-2S]-[ferredoxin]. PsaA and PsaB bind P700, the primary electron donor of photosystem I (PSI), as well as the electron acceptors A0, A1 and FX. PSI is a plastocyanin-ferredoxin oxidoreductase, converting photonic excitation into a charge separation, which transfers an electron from the donor P700 chlorophyll pair to the spectroscopically characterized acceptors A0, A1, FX, FA and FB in turn. Oxidized P700 is reduced on the lumenal side of the thylakoid membrane by plastocyanin. The polypeptide is Photosystem I P700 chlorophyll a apoprotein A1 (Zea mays (Maize)).